Here is a 544-residue protein sequence, read N- to C-terminus: MRLNSVALLSLVATALAAKAPFKIDFEVRRGESKDDLSPEDDSNPRFVKRDGSLDMTLTNKQTFYMATLKIGSNEDENRVLVDTGSSDLWVMSHDLKCVSAPNSKRNERSFGHGTGVKLNERELMQKRKNLYQPSRTIETDEEKEASEKIHNKLFGFGSIYSTVYITEGPGAYSTFSPFVGTEGGSGGSGGSNTCTSYGSFNTENSDTFKKNNTNDFEIQYADDTSAIGIWGYDDVTISNVTVKDLSFAIANETSSDVGVLGIGLPGLEVTTQYGYTYQNLPLKLKADGIIAKSLYSLYLNTADAKAGSILFGAIDHAKYQGDLVTVKMMRTYSQISYPVRIQVPVSKIDVESSSGSTTNILSSTTGVVLDTGSTLSYVFSDTLQSLGKALNGQYSNSVGAYVVNCNLADSSRTVDIEFGGNKTIKVPISDLVLQASKSTCILGVMQQSSSSSYMLFGDNILRSAYIVYDLDDYEVSLAQVSYTNKESIEVIGASGITNSSGSGTTSSSGTSTSTSTRHSAGSIISKPVYGLLLSLLISCYVLV.

Positions 1-17 (MRLNSVALLSLVATALA) are cleaved as a signal peptide. A disordered region spans residues 31-50 (GESKDDLSPEDDSNPRFVKR). One can recognise a Peptidase A1 domain in the interval 65–479 (YMATLKIGSN…DLDDYEVSLA (415 aa)). Residue aspartate 83 is part of the active site. Position 83-85 (83-85 (DTG)) interacts with pepstatin A. Cysteine 98 and cysteine 195 are oxidised to a cystine. 3 N-linked (GlcNAc...) asparagine glycosylation sites follow: asparagine 212, asparagine 240, and asparagine 252. Aspartate 371 is an active-site residue. Residue 371–375 (DTGST) coordinates pepstatin A. A disulfide bridge connects residues cysteine 406 and cysteine 441. N-linked (GlcNAc...) asparagine glycans are attached at residues asparagine 422 and asparagine 499. Positions 500–519 (SSGSGTTSSSGTSTSTSTRH) are disordered. Serine 520 is lipidated: GPI-anchor amidated serine. Positions 521 to 544 (AGSIISKPVYGLLLSLLISCYVLV) are cleaved as a propeptide — removed in mature form. A helical transmembrane segment spans residues 524-544 (IISKPVYGLLLSLLISCYVLV).

The protein belongs to the peptidase A1 family. Monomer. The GPI-anchor is attached to the protein in the endoplasmic reticulum and serves to target the protein to the cell surface. There, the glucosamine-inositol phospholipid moiety is cleaved off and the GPI-modified mannoprotein is covalently attached via its lipidless GPI glycan remnant to the 1,6-beta-glucan of the outer cell wall layer.

It is found in the cell membrane. The protein resides in the secreted. The protein localises to the cell wall. The enzyme catalyses Preferential cleavage at the carboxyl of hydrophobic amino acids, but fails to cleave 15-Leu-|-Tyr-16, 16-Tyr-|-Leu-17 and 24-Phe-|-Phe-25 of insulin B chain. Activates trypsinogen, and degrades keratin.. Its function is as follows. Secreted aspartic peptidases (SAPs) are a group of ten acidic hydrolases considered as key virulence factors. These enzymes supply the fungus with nutrient amino acids as well as are able to degrade the selected host's proteins involved in the immune defense. Moreover, acts toward human hemoglobin though limited proteolysis to generate a variety of antimicrobial hemocidins, enabling to compete with the other microorganisms of the same physiological niche using the microbicidal peptides generated from the host protein. Functionally, plays a key role in defense against host by cleaving histatin-5 (Hst 5), a peptide from human saliva that carries out fungicidal activity. The cleavage rate decreases in an order of SAP2 &gt; SAP9 &gt; SAP3 &gt; SAP7 &gt; SAP4 &gt; SAP1 &gt; SAP8. The first cleavage occurs between residues 'Lys-17' and 'His-18' of Hst 5, giving DSHAKRHHGYKRKFHEK and HHSHRGY peptides. Simultaneously, the DSHAKRHHGYKRK peptide is also formed. Further fragmentation by SAP9 results in FHEK product. The polypeptide is Secreted aspartic protease 9 (Candida albicans (strain SC5314 / ATCC MYA-2876) (Yeast)).